Consider the following 215-residue polypeptide: Nucleoside triphosphate pyrophosphatase (215 aa).

The active-site Proton acceptor is aspartate 77.

This sequence belongs to the Maf family. A divalent metal cation is required as a cofactor.

The protein localises to the cytoplasm. It catalyses the reaction a ribonucleoside 5'-triphosphate + H2O = a ribonucleoside 5'-phosphate + diphosphate + H(+). It carries out the reaction a 2'-deoxyribonucleoside 5'-triphosphate + H2O = a 2'-deoxyribonucleoside 5'-phosphate + diphosphate + H(+). Functionally, nucleoside triphosphate pyrophosphatase. May have a dual role in cell division arrest and in preventing the incorporation of modified nucleotides into cellular nucleic acids. The sequence is that of Nucleoside triphosphate pyrophosphatase from Rickettsia africae (strain ESF-5).